The primary structure comprises 38 residues: Potassium channel toxin alpha-KTx 2.15 (38 aa).

3 cysteine pairs are disulfide-bonded: C7-C29, C13-C34, and C17-C36.

The protein belongs to the short scorpion toxin superfamily. Potassium channel inhibitor family. Alpha-KTx 02 subfamily. In terms of tissue distribution, expressed by the venom gland.

It is found in the secreted. Its function is as follows. Blocks human voltage-gated potassium channels Kv1.2/KCNA2 (IC(50)=0.3 nM), Kv1.3/KCNA3 (IC(50)=8.3 nM) and Shaker IR (with inactivation domain removed) (IC(50)=12 nM) and blocks intermediate conductance calcium-activated potassium channel KCa3.1/KCNN4 (IC(50)=6.4 nM). In Centruroides tecomanus (Scorpion), this protein is Potassium channel toxin alpha-KTx 2.15.